Consider the following 77-residue polypeptide: MKLTCMMIVAVLFLTAWTFATAEDPRNGLENLFSKAHHEMKNPEDSKLNKRCVKYLDPCDMLRHTCCFGLCVLIACI.

An N-terminal signal peptide occupies residues 1 to 22 (MKLTCMMIVAVLFLTAWTFATA). Positions 23–49 (EDPRNGLENLFSKAHHEMKNPEDSKLN) are excised as a propeptide. Disulfide bonds link Cys52-Cys67, Cys59-Cys71, and Cys66-Cys76.

It belongs to the conotoxin O1 superfamily. In terms of tissue distribution, expressed by the venom duct.

It localises to the secreted. In Conus pennaceus (Feathered cone), this protein is Conotoxin PnMKLT1-0122.